Consider the following 207-residue polypeptide: Small ribosomal subunit protein uS4 (207 aa).

The tract at residues 31 to 54 is disordered; the sequence is KSKFETKPGQHGRTSGSRTSDFGL. Positions 42–52 are enriched in polar residues; the sequence is GRTSGSRTSDF. The region spanning 97 to 158 is the S4 RNA-binding domain; it reads SRLDNVVYRM…KAKKQLRVTE (62 aa).

It belongs to the universal ribosomal protein uS4 family. Part of the 30S ribosomal subunit. Contacts protein S5. The interaction surface between S4 and S5 is involved in control of translational fidelity.

Its function is as follows. One of the primary rRNA binding proteins, it binds directly to 16S rRNA where it nucleates assembly of the body of the 30S subunit. Functionally, with S5 and S12 plays an important role in translational accuracy. This Methylibium petroleiphilum (strain ATCC BAA-1232 / LMG 22953 / PM1) protein is Small ribosomal subunit protein uS4.